Consider the following 201-residue polypeptide: Ribosome maturation factor RimP (201 aa).

Residues 180–201 are disordered; sequence LRRGSAPAQDEEGEDEAPGAPL. Positions 188 to 201 are enriched in acidic residues; it reads QDEEGEDEAPGAPL.

This sequence belongs to the RimP family.

It is found in the cytoplasm. Functionally, required for maturation of 30S ribosomal subunits. The sequence is that of Ribosome maturation factor RimP from Methylobacterium sp. (strain 4-46).